Here is an 860-residue protein sequence, read N- to C-terminus: Alanine--tRNA ligase (860 aa).

Zn(2+)-binding residues include histidine 563, histidine 567, cysteine 665, and histidine 669. Residues 824–843 are disordered; that stretch reads VGGKGGGRPDMAQAGGTDSS.

This sequence belongs to the class-II aminoacyl-tRNA synthetase family. It depends on Zn(2+) as a cofactor.

Its subcellular location is the cytoplasm. It catalyses the reaction tRNA(Ala) + L-alanine + ATP = L-alanyl-tRNA(Ala) + AMP + diphosphate. Catalyzes the attachment of alanine to tRNA(Ala) in a two-step reaction: alanine is first activated by ATP to form Ala-AMP and then transferred to the acceptor end of tRNA(Ala). Also edits incorrectly charged Ser-tRNA(Ala) and Gly-tRNA(Ala) via its editing domain. This chain is Alanine--tRNA ligase, found in Vibrio vulnificus (strain YJ016).